Consider the following 241-residue polypeptide: Uridylate kinase (241 aa).

Residue 12-15 (KLSG) coordinates ATP. Residue G54 coordinates UMP. 2 residues coordinate ATP: G55 and R59. Residues D74 and 135 to 142 (TGNPFFTT) contribute to the UMP site. Residues T162, Y168, and D171 each contribute to the ATP site.

It belongs to the UMP kinase family. In terms of assembly, homohexamer.

It is found in the cytoplasm. It catalyses the reaction UMP + ATP = UDP + ADP. Its pathway is pyrimidine metabolism; CTP biosynthesis via de novo pathway; UDP from UMP (UMPK route): step 1/1. Inhibited by UTP. Its function is as follows. Catalyzes the reversible phosphorylation of UMP to UDP. This chain is Uridylate kinase, found in Magnetococcus marinus (strain ATCC BAA-1437 / JCM 17883 / MC-1).